Reading from the N-terminus, the 446-residue chain is Nuclear envelope morphology protein 1 (446 aa).

Residues 53–80 (VDQQYDHSSSHLKESDQNQERKNSVPKK) are disordered. A compositionally biased stretch (basic and acidic residues) spans 56-75 (QYDHSSSHLKESDQNQERKN). The chain crosses the membrane as a helical span at residues 87–103 (ILIEKIASILWALLLFL). Residues 132–168 (HTDKRNRGSNASENELPVSSSNINDSSEKTNPKNCNL) form a disordered region. Positions 139 to 156 (GSNASENELPVSSSNIND) are enriched in polar residues. In terms of domain architecture, FCP1 homology spans 247–424 (NTQKKKKLVI…LNLLPFLEAM (178 aa)).

Belongs to the Dullard family. As to quaternary structure, component of the NEM1-SPO7 complex.

The protein localises to the endoplasmic reticulum membrane. It localises to the nucleus membrane. It catalyses the reaction O-phospho-L-seryl-[protein] + H2O = L-seryl-[protein] + phosphate. The enzyme catalyses O-phospho-L-threonyl-[protein] + H2O = L-threonyl-[protein] + phosphate. Its function is as follows. Catalytic component of the NEM1-SPO7 complex which acts as a phosphatase and dephosphorylates the phosphatidic acid phosphohydrolase PAH1. Essential for the formation of a spherical nucleus and meiotic division. The NEM1-SPOo7 protein phosphatase is required for efficient mitophagy under prolonged respiration, as well as for reticulophagy and pexophagy. The protein is Nuclear envelope morphology protein 1 (NEM1) of Saccharomyces cerevisiae (strain ATCC 204508 / S288c) (Baker's yeast).